Reading from the N-terminus, the 198-residue chain is Probable GTP-binding protein EngB (198 aa).

The EngB-type G domain occupies asparagine 21–glycine 195. GTP-binding positions include glycine 29–serine 36, glycine 56–leucine 60, aspartate 81–glycine 84, threonine 151–aspartate 154, and valine 174–asparagine 176. The Mg(2+) site is built by serine 36 and threonine 58.

This sequence belongs to the TRAFAC class TrmE-Era-EngA-EngB-Septin-like GTPase superfamily. EngB GTPase family. It depends on Mg(2+) as a cofactor.

In terms of biological role, necessary for normal cell division and for the maintenance of normal septation. The chain is Probable GTP-binding protein EngB from Campylobacter jejuni subsp. jejuni serotype O:23/36 (strain 81-176).